The sequence spans 223 residues: DNA mismatch repair protein MutH (223 aa).

The protein belongs to the MutH family.

It localises to the cytoplasm. Functionally, sequence-specific endonuclease that cleaves unmethylated GATC sequences. It is involved in DNA mismatch repair. In Haemophilus influenzae (strain PittEE), this protein is DNA mismatch repair protein MutH.